We begin with the raw amino-acid sequence, 181 residues long: MANAAHRFTEYRKTMALLNILHYPDKRLHKVAKPVDKVDDRIRKLVADMAETMYAAPGIGLAATQVDVHERVIVIDVSEDKNELRAFINPEIIWSSDGKQVYEEGCLSVPGIYDEVERPDRVRVRALNEQGETFELDCEGLLAVCIQHEMDHLMGRVFVEYLSPLKQSRIKTKMKKLERAM.

Fe cation-binding residues include Cys106 and His148. The active site involves Glu149. His152 lines the Fe cation pocket.

It belongs to the polypeptide deformylase family. The cofactor is Fe(2+).

It carries out the reaction N-terminal N-formyl-L-methionyl-[peptide] + H2O = N-terminal L-methionyl-[peptide] + formate. Functionally, removes the formyl group from the N-terminal Met of newly synthesized proteins. Requires at least a dipeptide for an efficient rate of reaction. N-terminal L-methionine is a prerequisite for activity but the enzyme has broad specificity at other positions. The sequence is that of Peptide deformylase 1 from Burkholderia multivorans (strain ATCC 17616 / 249).